Consider the following 105-residue polypeptide: U1-sicaritoxin-Li1b (105 aa).

The signal sequence occupies residues 1-19 (MKLLFEGLLVLVLIAFVVA). Residues 20–36 (EFESDAEKWEALITQER) constitute a propeptide that is removed on maturation. Intrachain disulfides connect Cys-38–Cys-55, Cys-46–Cys-60, Cys-54–Cys-73, and Cys-62–Cys-71. Position 82 is an arginine amide (Arg-82). A propeptide spanning residues 86-105 (ALMVDPETHRMLSLHRLSEE) is cleaved from the precursor.

The protein belongs to the neurotoxin 28 (Litx) family. Expressed by the venom gland.

Its subcellular location is the secreted. In terms of biological role, toxin active against insects (S.frugiperda larvae). May act on sodium (Nav) or calcium (Cav) channels. This chain is U1-sicaritoxin-Li1b, found in Loxosceles intermedia (Brown spider).